Consider the following 249-residue polypeptide: Probable septum site-determining protein MinC (249 aa).

Positions 117 to 138 are disordered; that stretch reads AVRPPQPPPPPHARAEPAAPVA.

The protein belongs to the MinC family. Interacts with MinD and FtsZ.

In terms of biological role, cell division inhibitor that blocks the formation of polar Z ring septums. Rapidly oscillates between the poles of the cell to destabilize FtsZ filaments that have formed before they mature into polar Z rings. Prevents FtsZ polymerization. The polypeptide is Probable septum site-determining protein MinC (Xanthomonas campestris pv. campestris (strain 8004)).